A 420-amino-acid chain; its full sequence is Serine hydroxymethyltransferase (420 aa).

(6S)-5,6,7,8-tetrahydrofolate is bound by residues leucine 121 and 125-127 (GHL). An N6-(pyridoxal phosphate)lysine modification is found at lysine 229. Residue 355 to 357 (SPF) participates in (6S)-5,6,7,8-tetrahydrofolate binding.

Belongs to the SHMT family. As to quaternary structure, homodimer. Pyridoxal 5'-phosphate serves as cofactor.

The protein resides in the cytoplasm. The catalysed reaction is (6R)-5,10-methylene-5,6,7,8-tetrahydrofolate + glycine + H2O = (6S)-5,6,7,8-tetrahydrofolate + L-serine. Its pathway is one-carbon metabolism; tetrahydrofolate interconversion. The protein operates within amino-acid biosynthesis; glycine biosynthesis; glycine from L-serine: step 1/1. Catalyzes the reversible interconversion of serine and glycine with tetrahydrofolate (THF) serving as the one-carbon carrier. This reaction serves as the major source of one-carbon groups required for the biosynthesis of purines, thymidylate, methionine, and other important biomolecules. Also exhibits THF-independent aldolase activity toward beta-hydroxyamino acids, producing glycine and aldehydes, via a retro-aldol mechanism. The chain is Serine hydroxymethyltransferase from Chromohalobacter salexigens (strain ATCC BAA-138 / DSM 3043 / CIP 106854 / NCIMB 13768 / 1H11).